A 152-amino-acid polypeptide reads, in one-letter code: FMN reductase (NADH) RutF (152 aa).

Belongs to the non-flavoprotein flavin reductase family. RutF subfamily.

The catalysed reaction is FMNH2 + NAD(+) = FMN + NADH + 2 H(+). Its function is as follows. Catalyzes the reduction of FMN to FMNH2 which is used to reduce pyrimidine by RutA via the Rut pathway. This chain is FMN reductase (NADH) RutF, found in Shigella sonnei (strain Ss046).